Here is a 182-residue protein sequence, read N- to C-terminus: UPF0301 protein NGK_1355 (182 aa).

This sequence belongs to the UPF0301 (AlgH) family.

In Neisseria gonorrhoeae (strain NCCP11945), this protein is UPF0301 protein NGK_1355.